The following is a 346-amino-acid chain: MTQSLTIRRPDDWHLHLRDGAMLEGVLPETTRHFARAIVMPNLVPPVVTGAEAAAYRERIMAALPAGARFEPLMVLYLTETTDPADVRAAAASGLVKAVKLYPAGATTNSASGVRDFDRVRGVLETMAEIGLPLCVHGEVTDPAVDIFDREAVFLERVLEPIRRATPGLRVVLEHVTTRDGLDYVRGGGPDMAGTLTTHHLIINRNHILAGGIRPHYYCLPVAKRETHRLALREAATGGEGCFFLGTDSAPHADAAKESACGCAGCFTATNTLSILAHVFEEEGALDRLEGFVALNGPAFYRLPPNEERITLRKGEPLVLPARIETGAGPVTLFDPGFPLLWHVES.

2 residues coordinate Zn(2+): His14 and His16. Substrate is bound by residues 16-18 and Asn42; that span reads HLR. Residues Lys100, His137, and His175 each contribute to the Zn(2+) site. At Lys100 the chain carries N6-carboxylysine. His137 contributes to the substrate binding site. Leu220 serves as a coordination point for substrate. Asp248 serves as a coordination point for Zn(2+). Residue Asp248 is part of the active site. Substrate-binding residues include His252 and Ala264.

The protein belongs to the metallo-dependent hydrolases superfamily. DHOase family. Class II DHOase subfamily. In terms of assembly, homodimer. Zn(2+) is required as a cofactor.

The enzyme catalyses (S)-dihydroorotate + H2O = N-carbamoyl-L-aspartate + H(+). It participates in pyrimidine metabolism; UMP biosynthesis via de novo pathway; (S)-dihydroorotate from bicarbonate: step 3/3. Functionally, catalyzes the reversible cyclization of carbamoyl aspartate to dihydroorotate. The polypeptide is Dihydroorotase (Cereibacter sphaeroides (strain ATCC 17025 / ATH 2.4.3) (Rhodobacter sphaeroides)).